Reading from the N-terminus, the 226-residue chain is ATP synthase F(0) complex subunit a (226 aa).

The next 6 membrane-spanning stretches (helical) occupy residues 6–26 (FASFIAPTMMGLPIVTLIIMF), 68–88 (WSLMLMSLIMFIGSTNILGLL), 97–117 (QLSMNLGMAIPLWSATVFTGF), 136–156 (LLIPMLVIIETISLFIQPVAL), 164–184 (ITAGHLLIHLIGGATLALLNI), and 189–209 (AFITFTILILLTILEFAVALI).

This sequence belongs to the ATPase A chain family. Component of the ATP synthase complex composed at least of ATP5F1A/subunit alpha, ATP5F1B/subunit beta, ATP5MC1/subunit c (homooctomer), MT-ATP6/subunit a, MT-ATP8/subunit 8, ATP5ME/subunit e, ATP5MF/subunit f, ATP5MG/subunit g, ATP5MK/subunit k, ATP5MJ/subunit j, ATP5F1C/subunit gamma, ATP5F1D/subunit delta, ATP5F1E/subunit epsilon, ATP5PF/subunit F6, ATP5PB/subunit b, ATP5PD/subunit d, ATP5PO/subunit OSCP. ATP synthase complex consists of a soluble F(1) head domain (subunits alpha(3) and beta(3)) - the catalytic core - and a membrane F(0) domain - the membrane proton channel (subunits c, a, 8, e, f, g, k and j). These two domains are linked by a central stalk (subunits gamma, delta, and epsilon) rotating inside the F1 region and a stationary peripheral stalk (subunits F6, b, d, and OSCP). Interacts with DNAJC30; interaction is direct.

Its subcellular location is the mitochondrion inner membrane. It catalyses the reaction H(+)(in) = H(+)(out). In terms of biological role, subunit a, of the mitochondrial membrane ATP synthase complex (F(1)F(0) ATP synthase or Complex V) that produces ATP from ADP in the presence of a proton gradient across the membrane which is generated by electron transport complexes of the respiratory chain. ATP synthase complex consist of a soluble F(1) head domain - the catalytic core - and a membrane F(1) domain - the membrane proton channel. These two domains are linked by a central stalk rotating inside the F(1) region and a stationary peripheral stalk. During catalysis, ATP synthesis in the catalytic domain of F(1) is coupled via a rotary mechanism of the central stalk subunits to proton translocation. With the subunit c (ATP5MC1), forms the proton-conducting channel in the F(0) domain, that contains two crucial half-channels (inlet and outlet) that facilitate proton movement from the mitochondrial intermembrane space (IMS) into the matrix. Protons are taken up via the inlet half-channel and released through the outlet half-channel, following a Grotthuss mechanism. This Sus scrofa (Pig) protein is ATP synthase F(0) complex subunit a.